Here is a 196-residue protein sequence, read N- to C-terminus: Molybdopterin synthase catalytic subunit (196 aa).

Substrate contacts are provided by residues 110–111, lysine 126, and 133–135; these read HR and KKE. A disordered region spans residues 142-196; the sequence is GGIWRANRDGAVGERVDEDEEKKKPDMGPHGPILRPSRPGERGHGPVVRNHQLGS. Over residues 147-168 the composition is skewed to basic and acidic residues; sequence ANRDGAVGERVDEDEEKKKPDM.

Belongs to the MoaE family. MOCS2B subfamily. Heterotetramer; composed of 2 small (MOCS2A) and 2 large (MOCS2B) subunits.

Its subcellular location is the cytoplasm. It catalyses the reaction 2 [molybdopterin-synthase sulfur-carrier protein]-C-terminal-Gly-aminoethanethioate + cyclic pyranopterin phosphate + H2O = molybdopterin + 2 [molybdopterin-synthase sulfur-carrier protein]-C-terminal Gly-Gly + 2 H(+). The protein operates within cofactor biosynthesis; molybdopterin biosynthesis. In terms of biological role, catalytic subunit of the molybdopterin synthase complex, a complex that catalyzes the conversion of precursor Z into molybdopterin. Acts by mediating the incorporation of 2 sulfur atoms from thiocarboxylated MOCS2A into precursor Z to generate a dithiolene group. The polypeptide is Molybdopterin synthase catalytic subunit (Sclerotinia sclerotiorum (strain ATCC 18683 / 1980 / Ss-1) (White mold)).